The sequence spans 434 residues: Protein translocase subunit SecY (434 aa).

10 helical membrane-spanning segments follow: residues 19–39 (LFTL…IPGI), 73–93 (IFML…LLVY), 117–137 (YLTI…AKGI), 148–168 (YIFV…WFGE), 179–199 (TSLI…FNLF), 209–229 (VNPV…ILII), 264–284 (VLPV…LSGF), 300–320 (PNGF…TYFY), 362–382 (FSGS…QNIF), and 391–411 (IMGG…LIHI).

The protein belongs to the SecY/SEC61-alpha family. As to quaternary structure, component of the Sec protein translocase complex. Heterotrimer consisting of SecY, SecE and SecG subunits. The heterotrimers can form oligomers, although 1 heterotrimer is thought to be able to translocate proteins. Interacts with the ribosome. Interacts with SecDF, and other proteins may be involved. Interacts with SecA.

It localises to the cell inner membrane. Functionally, the central subunit of the protein translocation channel SecYEG. Consists of two halves formed by TMs 1-5 and 6-10. These two domains form a lateral gate at the front which open onto the bilayer between TMs 2 and 7, and are clamped together by SecE at the back. The channel is closed by both a pore ring composed of hydrophobic SecY resides and a short helix (helix 2A) on the extracellular side of the membrane which forms a plug. The plug probably moves laterally to allow the channel to open. The ring and the pore may move independently. This Borreliella burgdorferi (strain ATCC 35210 / DSM 4680 / CIP 102532 / B31) (Borrelia burgdorferi) protein is Protein translocase subunit SecY.